Reading from the N-terminus, the 861-residue chain is Putative glutamate--cysteine ligase 2-2 (861 aa).

The carboxylate-amine ligase stretch occupies residues 1–372 (MSDARIVAVG…RDVPPAGAAA (372 aa)). The interval 373 to 861 (ALGSAPAVSA…GSKDTWIPRR (489 aa)) is unknown.

It in the N-terminal section; belongs to the glutamate--cysteine ligase type 2 family. YbdK subfamily.

The catalysed reaction is L-cysteine + L-glutamate + ATP = gamma-L-glutamyl-L-cysteine + ADP + phosphate + H(+). In terms of biological role, ATP-dependent carboxylate-amine ligase which exhibits weak glutamate--cysteine ligase activity. This is Putative glutamate--cysteine ligase 2-2 from Frankia casuarinae (strain DSM 45818 / CECT 9043 / HFP020203 / CcI3).